The primary structure comprises 1232 residues: Protein transport protein sec-16A.1 (1232 aa).

Disordered regions lie at residues 18 to 134, 172 to 193, 815 to 843, 866 to 942, 972 to 1069, and 1140 to 1232; these read GASG…SGYA, RNGF…EEDE, PVQE…KWHD, KPIA…VVPE, QPIP…PQKQ, and PHLM…QNND. Polar residues predominate over residues 26-37; that stretch reads DWNNPYNASPPS. The span at 67–76 shows a compositional bias: low complexity; the sequence is RPILIQPARP. A compositionally biased stretch (polar residues) spans 78–100; it reads SQKSNRQGTGMSNGSRGLNSTFN. Over residues 817-836 the composition is skewed to polar residues; that stretch reads QESQQHVPQPQPVENKSISS. Low complexity predominate over residues 896-914; that stretch reads SSVTVAASASRTSTLTSST. Composition is skewed to polar residues over residues 1046-1060, 1149-1159, and 1168-1178; these read QQAT…NAKT, SNKSSTNSLRS, and YLQSGMATSQA. Residues 1194 to 1203 are compositionally biased toward low complexity; sequence PMSFSFMPAP. The segment covering 1222–1232 has biased composition (polar residues); sequence PSESLSKQNND.

The protein belongs to the SEC16 family. In terms of assembly, interacts with tfg-1 (via N-terminus); the interaction is direct and is required for both the localization of tfg-1 and to maintain the distribution of sec-16A.1 at endoplasmic reticulum exit sites (ERES).

The protein localises to the endoplasmic reticulum. It localises to the endoplasmic reticulum-Golgi intermediate compartment. Functionally, plays a role in the organization of the endoplasmic reticulum exit sites (ERES), also known as transitional endoplasmic reticulum (tER). In association with tfg-1, accumulates at ERES to positively regulate secretory cargo trafficking from the endoplasmic reticulum to the endoplasmic reticulum-Golgi intermediate compartment (ERGIC) and Golgi apparatus. In Caenorhabditis elegans, this protein is Protein transport protein sec-16A.1.